We begin with the raw amino-acid sequence, 902 residues long: MWIPSKLTRPGRLHNAIVRPRVLDLLQQAPYYKLVLFRSPAGYGKTTMAAQWLSDKPNVGWYSIDDSDNDGFRFVNYLLQALNKATNFSCSNAQKLAEKRQISSLRSLFSEVFAEMADFHQECYVVLDDYHLITNDEIHESMRFFLKHMPDNLTVVVTSRAAPPLGTANLRVRDLMIEIGNEMLAFDTEETTRFFNQRIADGIDEDMANSLRTYVEGWPSAMQLIALQAQHQNRTLAQTVESVSQFNHAHLWDYLVEEVFDLLDHETRHFLMQVSVLDHFNDELVFALTQREDALGLIESLNRYGLFIYPLEGEHNWFRFHNLFGEFLSHERQARIPQQEKDLHRNAAVAWLQQKSPHQAIHHAQKSNDKDLVVEILNEFGWKMFNQGELSTLEHAINKLDAELLFSHPKLTMLRAWLAQSQHRYNQVGQLLEEAEEEHKKRNIELDIHYQGQANALLAQVAINSNQPEKALELAELALSQLDNTIYRSRIVATSVVGEVNHVLGKLDRALPMMQQTEKLARQYQVYHQALWAILQQSEILIAQGYVQAAFELQDSGFRLIEDQQLQHVPLHEFLLRIRAQVLWCWNRLDEAEECAYRGLQILENHSPSKHLHSYSMLARIAIGRGELDKAGKFIEHIQHLMKQSTYHVDWTANASLSLILFWQARGNTEAMQEWLNTAVRPESACNHFLQLQWRNIVRAHINLGQYEEARQALNFLQSEARRTNLITDTNRNLVVEAVLAARQKDEEQAKALLKEALVMTNQTGMVGNFLIDGATIGGLLEKLSLRHELGDLERHRAQQLMKDISSNQRSRSIHFDEDFIEKLVNHPNVPELVRTSPLTQREWQVLGLIYSGFSNEQIAQELDVAGTTIKTHIRNLYQKLNIANRKEAIVTAENLLQLMGY.

39 to 46 (SPAGYGKT) lines the ATP pocket. Residues 832–897 (ELVRTSPLTQ…EAIVTAENLL (66 aa)) enclose the HTH luxR-type domain. Positions 856-875 (NEQIAQELDVAGTTIKTHIR) form a DNA-binding region, H-T-H motif.

The protein belongs to the MalT family. As to quaternary structure, monomer in solution. Oligomerizes to an active state in the presence of the positive effectors ATP and maltotriose.

With respect to regulation, activated by ATP and maltotriose, which are both required for DNA binding. Its function is as follows. Positively regulates the transcription of the maltose regulon whose gene products are responsible for uptake and catabolism of malto-oligosaccharides. Specifically binds to the promoter region of its target genes, recognizing a short DNA motif called the MalT box. The polypeptide is HTH-type transcriptional regulator MalT (Vibrio parahaemolyticus serotype O3:K6 (strain RIMD 2210633)).